A 108-amino-acid chain; its full sequence is Thiosulfate sulfurtransferase GlpE (108 aa).

Residues 17–105 (QEKEAVLVDI…WQRQFPAEVA (89 aa)) form the Rhodanese domain. Residue Cys-65 is the Cysteine persulfide intermediate of the active site.

Belongs to the GlpE family.

The protein localises to the cytoplasm. The catalysed reaction is thiosulfate + hydrogen cyanide = thiocyanate + sulfite + 2 H(+). It catalyses the reaction thiosulfate + [thioredoxin]-dithiol = [thioredoxin]-disulfide + hydrogen sulfide + sulfite + 2 H(+). Functionally, transferase that catalyzes the transfer of sulfur from thiosulfate to thiophilic acceptors such as cyanide or dithiols. May function in a CysM-independent thiosulfate assimilation pathway by catalyzing the conversion of thiosulfate to sulfite, which can then be used for L-cysteine biosynthesis. In Escherichia coli O127:H6 (strain E2348/69 / EPEC), this protein is Thiosulfate sulfurtransferase GlpE.